A 351-amino-acid polypeptide reads, in one-letter code: Small ribosomal subunit protein uS2 (351 aa).

The segment at glutamine 302 to asparagine 351 is disordered. Residues threonine 340–asparagine 351 show a composition bias toward basic and acidic residues.

Belongs to the universal ribosomal protein uS2 family.

This is Small ribosomal subunit protein uS2 from Ureaplasma urealyticum serovar 10 (strain ATCC 33699 / Western).